The primary structure comprises 744 residues: Collagen alpha-1(VIII) chain (744 aa).

The N-terminal stretch at 1-27 is a signal peptide; it reads MAVLPGPLQLLGVLLTISLSSIRLIQA. Residues 29–117 are nonhelical region (NC2); sequence AYYGIKPLPP…GKEIPLASLR (89 aa). 2 disordered regions span residues 115 to 393 and 459 to 589; these read SLRG…GEPG and GPKG…PDMG. A triple-helical region (COL1) region spans residues 118–571; it reads GEQGPRGEPG…PGPPGPPGPP (454 aa). Over residues 128 to 137 the composition is skewed to pro residues; that stretch reads PRGPPGPPGL. A compositionally biased stretch (low complexity) spans 168–178; the sequence is KPGAMGMPGAK. Composition is skewed to gly residues over residues 203-217 and 328-337; these read GLPG…GLPG and GFPGGKGEQG. 2 stretches are compositionally biased toward low complexity: residues 466–496 and 538–556; these read QKGV…LQGP and AGLH…QGQP. Residues 558–581 show a composition bias toward pro residues; the sequence is LPGPPGPPGPPGPPAVMPPTPPPQ. The tract at residues 572–744 is nonhelical region (NC1); sequence AVMPPTPPPQ…SFSGYLLYPM (173 aa). One can recognise a C1q domain in the interval 611-744; sequence PAYEMPAFTA…SFSGYLLYPM (134 aa).

In terms of assembly, homotrimers, or heterotrimers in association with alpha 2(VIII) type collagens. Four homotrimers can form a tetrahedron stabilized by central interacting C-terminal NC1 trimers. Post-translationally, prolines at the third position of the tripeptide repeating unit (G-X-Y) are hydroxylated in some or all of the chains. Proteolytically cleaved by neutrophil elastase, in vitro. Proteolytic processing produces the C-terminal NC1 domain fragment, vastatin. As to expression, expressed primarily in the subendothelium of large blood vessels. Also expressed in arterioles and venules in muscle, heart, kidney, spleen, umbilical cord, liver and lung and is also found in connective tissue layers around hair follicles, around nerve bundles in muscle, in the dura of the optic nerve, in cornea and sclera, and in the perichondrium of cartilaginous tissues. In the kidney, expressed in mesangial cells, glomerular endothelial cells, and tubular epithelial cells. Also expressed in mast cells, and in astrocytes during the repair process. Expressed in Descemet's membrane. Specifically expressed in peritoneal fibroblasts and mesothelial cells.

Its subcellular location is the secreted. The protein resides in the extracellular space. The protein localises to the extracellular matrix. It is found in the basement membrane. Macromolecular component of the subendothelium. Major component of the Descemet's membrane (basement membrane) of corneal endothelial cells. Also a component of the endothelia of blood vessels. Necessary for migration and proliferation of vascular smooth muscle cells and thus, has a potential role in the maintenance of vessel wall integrity and structure, in particular in atherogenesis. Its function is as follows. Vastatin, the C-terminal fragment comprising the NC1 domain, inhibits aortic endothelial cell proliferation and causes cell apoptosis. This is Collagen alpha-1(VIII) chain (COL8A1) from Homo sapiens (Human).